Consider the following 143-residue polypeptide: Flagellar assembly factor FliW (143 aa).

Belongs to the FliW family. Interacts with translational regulator CsrA and flagellin(s).

The protein resides in the cytoplasm. Its function is as follows. Acts as an anti-CsrA protein, binds CsrA and prevents it from repressing translation of its target genes, one of which is flagellin. Binds to flagellin and participates in the assembly of the flagellum. This Clostridium botulinum (strain ATCC 19397 / Type A) protein is Flagellar assembly factor FliW.